Reading from the N-terminus, the 449-residue chain is MARRARRPRGRFYAFRRGRWHHLKRLRRRYKFRHRRRQRYRRRAFRKAFHNPRPGTYSVRLPNPQSTMTIRFQGVIFLTEGLILPKNSTAGGYADHMYGARVAKISVNLKEFLLASMNLTYVSKIGGPIAGELIADGSKSQAAENWPNCWLPLDNNVPSATPSAWWRWALMMMQPTDSCRFFNHPKQMTLQDMGRMFGGWHLFRHIETRFQLLATKNEGSFSPVASLLSQGEYLTRRDDVKYSSDHQNRWRKGEQPMTGGIAYATGKMRPDEQQYPAMPPDPPIITSTTAQGTQVRCMYSTQAWWSWDTYMSFATLTALGAQWSFPPGQRSVSRRSFNHHKARGAGDPKGQRWHTLVPLGTETITDSYMGAPASELDTNFFTLYVAQGTNKSQQYKFGTATYALKEPVMKSDSWAVVRVQSVWQLGNRQRPYPWDVNWANSTMYWGTQP.

The tract at residues 1 to 43 (MARRARRPRGRFYAFRRGRWHHLKRLRRRYKFRHRRRQRYRRR) is DNA-binding. Residues 6 to 47 (RRPRGRFYAFRRGRWHHLKRLRRRYKFRHRRRQRYRRRAFRK) are nuclear localization signals.

The protein belongs to the gyrovirus capsid protein family. As to quaternary structure, homomultimer (Potential). Interacts with Rep; this interaction relocates Rep into the nucleus.

It localises to the host nucleus. The protein resides in the virion. Its function is as follows. Self-assembles to form the virion icosahedral capsid with a T=1 symmetry. This very small capsid (25 nm in diameter) allows the virus to be very stable in the environment and resistant to some disinfectants, including detergents. Essential for the initial attachment to host receptors. After attachment, the virus is endocytosed and traffics to the nucleus. The capsid protein binds and transports the viral genome and Rep across the nuclear envelope. This Chicken anemia virus (isolate Australia) (CAV) protein is Capsid protein (VP1).